Reading from the N-terminus, the 587-residue chain is Cyclic di-GMP phosphodiesterase PA2567 (587 aa).

In terms of domain architecture, GAF spans 28–157 (DEVFEEILAA…LEHFARLVMA (130 aa)). Residues 192 to 327 (GALTVIAADL…GVGWARYNPP (136 aa)) enclose the GGDEF domain. The 253-residue stretch at 335–587 (AFTLLTSLSQ…PEQLEDWLRR (253 aa)) folds into the EAL domain.

The catalysed reaction is 3',3'-c-di-GMP + H2O = 5'-phosphoguanylyl(3'-&gt;5')guanosine + H(+). In terms of biological role, phosphodiesterase (PDE) that catalyzes the hydrolysis of cyclic diguanylate (c-di-GMP) to 5'-pGpG. The polypeptide is Cyclic di-GMP phosphodiesterase PA2567 (Pseudomonas aeruginosa (strain ATCC 15692 / DSM 22644 / CIP 104116 / JCM 14847 / LMG 12228 / 1C / PRS 101 / PAO1)).